Here is a 134-residue protein sequence, read N- to C-terminus: Large ribosomal subunit protein uL18 (134 aa).

It belongs to the universal ribosomal protein uL18 family. As to quaternary structure, part of the 50S ribosomal subunit; part of the 5S rRNA/L5/L18/L25 subcomplex. Contacts the 5S and 23S rRNAs.

Its function is as follows. This is one of the proteins that bind and probably mediate the attachment of the 5S RNA into the large ribosomal subunit, where it forms part of the central protuberance. The chain is Large ribosomal subunit protein uL18 from Corynebacterium efficiens (strain DSM 44549 / YS-314 / AJ 12310 / JCM 11189 / NBRC 100395).